Here is a 141-residue protein sequence, read N- to C-terminus: Hemoglobin subunit alpha-D (141 aa).

A Globin domain is found at 1–141; sequence VLTAEDKKLI…VAAVLAEKYR (141 aa). Heme b is bound by residues histidine 58 and histidine 87.

This sequence belongs to the globin family. As to quaternary structure, heterotetramer of two alpha-D chains and two beta chains. In terms of tissue distribution, red blood cells.

Its function is as follows. Involved in oxygen transport from the lung to the various peripheral tissues. The protein is Hemoglobin subunit alpha-D (HBAD) of Sturnus vulgaris (Starling).